The sequence spans 620 residues: Magnesium-chelatase 67 kDa subunit (620 aa).

33-40 (STVGSGKS) lines the ATP pocket. The segment at 272-322 (ATRMPEREPNPEEMAQDEPPPQEEQPQDEAEDQNAPPDEADSDADEEQEET) is disordered. Over residues 296 to 322 (QPQDEAEDQNAPPDEADSDADEEQEET) the composition is skewed to acidic residues. The 189-residue stretch at 432-620 (LFIFMVDASG…AEQIVEAALS (189 aa)) folds into the VWFA domain.

Belongs to the Mg-chelatase subunits D/I family.

The enzyme catalyses protoporphyrin IX + Mg(2+) + ATP + H2O = Mg-protoporphyrin IX + ADP + phosphate + 3 H(+). Its pathway is porphyrin-containing compound metabolism; bacteriochlorophyll biosynthesis. Its function is as follows. Involved in bacteriochlorophyll biosynthesis; introduces a magnesium ion into protoporphyrin IX to yield Mg-protoporphyrin IX. The chain is Magnesium-chelatase 67 kDa subunit (bchD) from Chlorobaculum tepidum (strain ATCC 49652 / DSM 12025 / NBRC 103806 / TLS) (Chlorobium tepidum).